The chain runs to 158 residues: NAD(P)H-quinone oxidoreductase subunit J, chloroplastic (158 aa).

It belongs to the complex I 30 kDa subunit family. As to quaternary structure, NDH is composed of at least 16 different subunits, 5 of which are encoded in the nucleus.

It is found in the plastid. It localises to the chloroplast thylakoid membrane. The catalysed reaction is a plastoquinone + NADH + (n+1) H(+)(in) = a plastoquinol + NAD(+) + n H(+)(out). It catalyses the reaction a plastoquinone + NADPH + (n+1) H(+)(in) = a plastoquinol + NADP(+) + n H(+)(out). NDH shuttles electrons from NAD(P)H:plastoquinone, via FMN and iron-sulfur (Fe-S) centers, to quinones in the photosynthetic chain and possibly in a chloroplast respiratory chain. The immediate electron acceptor for the enzyme in this species is believed to be plastoquinone. Couples the redox reaction to proton translocation, and thus conserves the redox energy in a proton gradient. This is NAD(P)H-quinone oxidoreductase subunit J, chloroplastic from Lactuca sativa (Garden lettuce).